The sequence spans 855 residues: MLKEKYSFKEVENKYNILWEDSRVYKWDGKKENTFTIDTPPPTISGKLHIGHIFSYCHTDFIARFQRMLGKDIFYPIGFDDNGLPTERLVEQTYKTRAREVGREKFIEMCHEVIEKSKQEFKELLRSVGISYDWSLEYHTISKETVTLSQMSFIDLYNKGYAYRKMQPILWDPVDKTAIAQAEIEDKVCESSLNTITFSTEENEQIDIATTRPELFLACVAVFCHPEDARYAHLIGKTSVVPIIGVKVPIIADGRVKIDKGTGLVMCCTFGDELDIYWQQKHNLPMKIIIDQDGKINLDSMYDNNRSQYQGIGMTGERSTGVIKEGAISPHYDVIPVRNTRIYDEINGLKVKEARKKIIKILTERGLLTGSTNISHSVKCAERSGVSLEILPTYQWFIKTLDQKAQVLDKVKECNWYPSTMRKRMEVWIEGLNWDWCISRQRYFGVPFPVWYSRRKGEEGKVILAEVEDLPVDPLKDLPKGYSKEEVVPDQDVMDTWATSAITPQLSALAVNSEFSLPDHRYNTIFPADLRSQSHEIIRTWAFYTILKAYYHANSLPWKNIMVSGWCLADDKKKMSKSKGNIITPKSILDTYGADVVRYWTANSRLGVDTVYSENILKIGKRLVTKLWNASKFVSIFMERYQAVSINSVSETMDQWILSKLYKVIEKATNNLLQFEYCEALGAVEGFFWKDFCDNYLELAKKRAYGDKVSSKANLSAKQSLTYVLNTILRLLAPFLPYITEQIYHQLYSDNSVHNRGNWPNKEELIYDKHSEEMGDKFMQILNLVRKIKADNNVSVKHLIKKLMIKANVKEDKLNQSAQNDLQTVCNAEMIEWSENAQAGLITENGKFIVSIDLY.

Residues 42–52 (PTISGKLHIGH) carry the 'HIGH' region motif. Residues 574-578 (KMSKS) carry the 'KMSKS' region motif. Lys577 contacts ATP.

This sequence belongs to the class-I aminoacyl-tRNA synthetase family. ValS type 2 subfamily. In terms of assembly, monomer.

It localises to the cytoplasm. It catalyses the reaction tRNA(Val) + L-valine + ATP = L-valyl-tRNA(Val) + AMP + diphosphate. Catalyzes the attachment of valine to tRNA(Val). As ValRS can inadvertently accommodate and process structurally similar amino acids such as threonine, to avoid such errors, it has a 'posttransfer' editing activity that hydrolyzes mischarged Thr-tRNA(Val) in a tRNA-dependent manner. This chain is Valine--tRNA ligase, found in Wolbachia sp. subsp. Brugia malayi (strain TRS).